Reading from the N-terminus, the 22-residue chain is Mu-conotoxin TIIIA (22 aa).

3 disulfides stabilise this stretch: Cys4–Cys16, Cys5–Cys21, and Cys11–Cys22. 2 positions are modified to 4-hydroxyproline: Pro8 and Pro18. Cys22 is modified (cysteine amide).

Belongs to the conotoxin M superfamily. As to expression, expressed by the venom duct.

The protein localises to the secreted. Its function is as follows. Mu-conotoxins block voltage-gated sodium channels (Nav). This synthetic toxin reversibly and potently blocks rNav1.4/SCN4A (IC(50) is 9 nM) and rNav1.2/SCN2A (IC(50) is 40 nM). It also moderately blocks rNav1.1/SCN1A, rNav1.3/SCN3A, and rNav1.6/SCN8A. The block of SCN1A and SCN2A is modified when beta-subunits are coexpressed with alpha subunits. Hence, blocks of channels containing beta-1 and beta-3 subunits are more potent (compared to channels without beta subunits), whereas blocks of channels containing beta-2 and beta-4 subunits are less potent (compared to channels without beta subunits). The polypeptide is Mu-conotoxin TIIIA (Conus tulipa (Fish-hunting cone snail)).